Consider the following 345-residue polypeptide: Phosphoribosylformylglycinamidine cyclo-ligase (345 aa).

It belongs to the AIR synthase family.

The protein resides in the cytoplasm. It carries out the reaction 2-formamido-N(1)-(5-O-phospho-beta-D-ribosyl)acetamidine + ATP = 5-amino-1-(5-phospho-beta-D-ribosyl)imidazole + ADP + phosphate + H(+). It functions in the pathway purine metabolism; IMP biosynthesis via de novo pathway; 5-amino-1-(5-phospho-D-ribosyl)imidazole from N(2)-formyl-N(1)-(5-phospho-D-ribosyl)glycinamide: step 2/2. The protein is Phosphoribosylformylglycinamidine cyclo-ligase of Limosilactobacillus reuteri (strain DSM 20016) (Lactobacillus reuteri).